A 163-amino-acid polypeptide reads, in one-letter code: Single-stranded DNA-binding protein 2 (163 aa).

Residues 1 to 104 (MINNVVLVGR…VVADNFQMLE (104 aa)) form the SSB domain. Residues 109–163 (REGGSTGSFNGGFNNNTSSSNSYSAPAQQTPNFGRDDSPFGNSNPMDISDDDLPF) form a disordered region. The segment covering 119 to 130 (GGFNNNTSSSNS) has biased composition (low complexity). Residues 131–140 (YSAPAQQTPN) show a composition bias toward polar residues. Positions 158–163 (DDDLPF) match the Important for interaction with partner proteins motif.

As to quaternary structure, homotetramer.

In terms of biological role, plays an important role in DNA replication, recombination and repair. Binds to ssDNA and to an array of partner proteins to recruit them to their sites of action during DNA metabolism. The sequence is that of Single-stranded DNA-binding protein 2 (ssb2) from Streptococcus pyogenes serotype M18 (strain MGAS8232).